We begin with the raw amino-acid sequence, 315 residues long: Methionyl-tRNA formyltransferase (315 aa).

107–110 (SLLP) serves as a coordination point for (6S)-5,6,7,8-tetrahydrofolate.

This sequence belongs to the Fmt family.

It catalyses the reaction L-methionyl-tRNA(fMet) + (6R)-10-formyltetrahydrofolate = N-formyl-L-methionyl-tRNA(fMet) + (6S)-5,6,7,8-tetrahydrofolate + H(+). In terms of biological role, attaches a formyl group to the free amino group of methionyl-tRNA(fMet). The formyl group appears to play a dual role in the initiator identity of N-formylmethionyl-tRNA by promoting its recognition by IF2 and preventing the misappropriation of this tRNA by the elongation apparatus. The protein is Methionyl-tRNA formyltransferase of Borrelia garinii subsp. bavariensis (strain ATCC BAA-2496 / DSM 23469 / PBi) (Borreliella bavariensis).